A 38-amino-acid chain; its full sequence is Large ribosomal subunit protein bL36 (38 aa).

This sequence belongs to the bacterial ribosomal protein bL36 family.

The polypeptide is Large ribosomal subunit protein bL36 (Chlorobium phaeobacteroides (strain BS1)).